The sequence spans 191 residues: Ribosome maturation factor RimM (191 aa).

The region spanning 114 to 191 (EDEYYWVDLI…RIVVDWQPDY (78 aa)) is the PRC barrel domain.

The protein belongs to the RimM family. In terms of assembly, binds ribosomal protein uS19.

It is found in the cytoplasm. Functionally, an accessory protein needed during the final step in the assembly of 30S ribosomal subunit, possibly for assembly of the head region. Essential for efficient processing of 16S rRNA. May be needed both before and after RbfA during the maturation of 16S rRNA. It has affinity for free ribosomal 30S subunits but not for 70S ribosomes. In Paracidovorax citrulli (strain AAC00-1) (Acidovorax citrulli), this protein is Ribosome maturation factor RimM.